The following is a 262-amino-acid chain: Pyridoxine 5'-phosphate synthase (262 aa).

Asparagine 6 lines the 3-amino-2-oxopropyl phosphate pocket. 8–9 contributes to the 1-deoxy-D-xylulose 5-phosphate binding site; it reads DH. Arginine 17 provides a ligand contact to 3-amino-2-oxopropyl phosphate. Catalysis depends on histidine 43, which acts as the Proton acceptor. 2 residues coordinate 1-deoxy-D-xylulose 5-phosphate: arginine 45 and histidine 50. The active-site Proton acceptor is the glutamate 70. Threonine 102 contacts 1-deoxy-D-xylulose 5-phosphate. Histidine 215 serves as the catalytic Proton donor. 3-amino-2-oxopropyl phosphate-binding positions include glycine 216 and 237-238; that span reads GH.

It belongs to the PNP synthase family. In terms of assembly, homooctamer; tetramer of dimers.

The protein localises to the cytoplasm. The enzyme catalyses 3-amino-2-oxopropyl phosphate + 1-deoxy-D-xylulose 5-phosphate = pyridoxine 5'-phosphate + phosphate + 2 H2O + H(+). Its pathway is cofactor biosynthesis; pyridoxine 5'-phosphate biosynthesis; pyridoxine 5'-phosphate from D-erythrose 4-phosphate: step 5/5. Its function is as follows. Catalyzes the complicated ring closure reaction between the two acyclic compounds 1-deoxy-D-xylulose-5-phosphate (DXP) and 3-amino-2-oxopropyl phosphate (1-amino-acetone-3-phosphate or AAP) to form pyridoxine 5'-phosphate (PNP) and inorganic phosphate. The polypeptide is Pyridoxine 5'-phosphate synthase (Helicobacter pylori (strain Shi470)).